A 525-amino-acid polypeptide reads, in one-letter code: Averantin hydroxylase (525 aa).

Residues 36 to 56 (VLATFVAGIGALLLWTLTTVF) form a helical membrane-spanning segment. A glycan (N-linked (GlcNAc...) asparagine) is linked at asparagine 315. Cysteine 462 provides a ligand contact to heme.

This sequence belongs to the cytochrome P450 family. Heme is required as a cofactor.

Its subcellular location is the membrane. It catalyses the reaction (1'S)-averantin + reduced [NADPH--hemoprotein reductase] + O2 = (1'S,5'R)-5'-hydroxyaverantin + oxidized [NADPH--hemoprotein reductase] + H2O. It carries out the reaction (1'S)-averantin + reduced [NADPH--hemoprotein reductase] + O2 = (1'S,5'S)-5'-hydroxyaverantin + oxidized [NADPH--hemoprotein reductase] + H2O + H(+). The protein operates within mycotoxin biosynthesis. In terms of biological role, averantin hydroxylase; part of the fragmented gene cluster that mediates the biosynthesis of dothistromin (DOTH), a polyketide toxin very similar in structure to the aflatoxin precursor, versicolorin B. The first step of the pathway is the conversion of acetate to norsolorinic acid (NOR) and requires the fatty acid synthase subunits hexA and hexB, as well as the polyketide synthase pksA. PksA combines a hexanoyl starter unit and 7 malonyl-CoA extender units to synthesize the precursor NOR. The hexanoyl starter unit is provided to the acyl-carrier protein (ACP) domain by the fungal fatty acid synthase hexA/hexB. The second step is the conversion of NOR to averantin (AVN) and requires the norsolorinic acid ketoreductase nor1, which catalyzes the dehydration of norsolorinic acid to form (1'S)-averantin. The cytochrome P450 monooxygenase avnA then catalyzes the hydroxylation of AVN to 5'hydroxyaverantin (HAVN). The next step is performed by adhA that transforms HAVN to averufin (AVF). Averufin might then be converted to hydroxyversicolorone by cypX and avfA. Hydroxyversicolorone is further converted versiconal hemiacetal acetate (VHA) by moxY. VHA is then the substrate for the versiconal hemiacetal acetate esterase est1 to yield versiconal (VAL). Versicolorin B synthase vbsA then converts VAL to versicolorin B (VERB) by closing the bisfuran ring. Then, the activity of the versicolorin B desaturase verB leads to versicolorin A (VERA). DotB, a predicted chloroperoxidase, may perform epoxidation of the A-ring of VERA. Alternatively, a cytochrome P450, such as cypX or avnA could catalyze this step. It is also possible that another, uncharacterized, cytochrome P450 enzyme is responsible for this step. Opening of the epoxide could potentially be achieved by the epoxide hydrolase epoA. However, epoA seems not to be required for DOTH biosynthesis, but other epoxide hydrolases may have the ability to complement this hydrolysis. Alternatively, opening of the epoxide ring could be achieved non-enzymatically. The next step is the deoxygenation of ring A to yield the 5,8-dihydroxyanthraquinone which is most likely catalyzed by the NADPH dehydrogenase encoded by ver1. The last stages of DOTH biosynthesis are proposed to involve hydroxylation of the bisfuran. OrdB and norB might have oxidative roles here. An alternative possibility is that cytochrome P450 monoogenases such as avnA and cypX might perform these steps in addition to previously proposed steps. The chain is Averantin hydroxylase from Dothistroma septosporum (strain NZE10 / CBS 128990) (Red band needle blight fungus).